We begin with the raw amino-acid sequence, 195 residues long: C2 domain-containing protein DDB_G0290753 (195 aa).

Residues 38 to 161 (KKLTKETKFE…NIKKYSYTFK (124 aa)) enclose the C2 domain. Ca(2+) contacts are provided by Asp-72, Asp-78, Asp-131, Asp-133, and Asp-139.

The cofactor is Ca(2+).

The protein is C2 domain-containing protein DDB_G0290753 of Dictyostelium discoideum (Social amoeba).